The sequence spans 239 residues: Ribosomal RNA small subunit methyltransferase G (239 aa).

S-adenosyl-L-methionine is bound by residues Gly79, Phe84, 130–131 (AE), and Arg149.

Belongs to the methyltransferase superfamily. RNA methyltransferase RsmG family.

It is found in the cytoplasm. Its function is as follows. Specifically methylates the N7 position of a guanine in 16S rRNA. In Lactobacillus delbrueckii subsp. bulgaricus (strain ATCC 11842 / DSM 20081 / BCRC 10696 / JCM 1002 / NBRC 13953 / NCIMB 11778 / NCTC 12712 / WDCM 00102 / Lb 14), this protein is Ribosomal RNA small subunit methyltransferase G.